A 141-amino-acid polypeptide reads, in one-letter code: Large ribosomal subunit protein uL11 (141 aa).

Belongs to the universal ribosomal protein uL11 family. As to quaternary structure, part of the ribosomal stalk of the 50S ribosomal subunit. Interacts with L10 and the large rRNA to form the base of the stalk. L10 forms an elongated spine to which L12 dimers bind in a sequential fashion forming a multimeric L10(L12)X complex. In terms of processing, one or more lysine residues are methylated.

Forms part of the ribosomal stalk which helps the ribosome interact with GTP-bound translation factors. This chain is Large ribosomal subunit protein uL11, found in Tropheryma whipplei (strain TW08/27) (Whipple's bacillus).